The sequence spans 95 residues: Aspartyl/glutamyl-tRNA(Asn/Gln) amidotransferase subunit C (95 aa).

Belongs to the GatC family. As to quaternary structure, heterotrimer of A, B and C subunits.

It carries out the reaction L-glutamyl-tRNA(Gln) + L-glutamine + ATP + H2O = L-glutaminyl-tRNA(Gln) + L-glutamate + ADP + phosphate + H(+). The enzyme catalyses L-aspartyl-tRNA(Asn) + L-glutamine + ATP + H2O = L-asparaginyl-tRNA(Asn) + L-glutamate + ADP + phosphate + 2 H(+). In terms of biological role, allows the formation of correctly charged Asn-tRNA(Asn) or Gln-tRNA(Gln) through the transamidation of misacylated Asp-tRNA(Asn) or Glu-tRNA(Gln) in organisms which lack either or both of asparaginyl-tRNA or glutaminyl-tRNA synthetases. The reaction takes place in the presence of glutamine and ATP through an activated phospho-Asp-tRNA(Asn) or phospho-Glu-tRNA(Gln). This is Aspartyl/glutamyl-tRNA(Asn/Gln) amidotransferase subunit C from Dehalococcoides mccartyi (strain CBDB1).